Here is a 208-residue protein sequence, read N- to C-terminus: Putative RING finger protein 413R (208 aa).

The disordered stretch occupies residues 1-87 (MDAIFYPLPI…RHWSDDDSDR (87 aa)). The segment covering 22–71 (DFQEEDFQEEDFQEEDFQEEDFQEEDEDEEDEEVNEYPSDLDDEYPDSDY) has biased composition (acidic residues). Over residues 72–82 (YDERSDRHWSD) the composition is skewed to basic and acidic residues. The stretch at 83-147 (DDSDRDLDDL…KLTTLSKNLT (65 aa)) forms a coiled coil. The RING-type zinc finger occupies 148–196 (CIICLTNQVQILTIPCGHLIMCNPCSLNLNNSVCTRGVNSNYEKCPKCR).

The polypeptide is Putative RING finger protein 413R (EF2) (Acheta domesticus (House cricket)).